Reading from the N-terminus, the 486-residue chain is Glutamate--tRNA ligase 2 (486 aa).

Positions 12–22 (PSPTGELHIGN) match the 'HIGH' region motif. The short motif at 252 to 256 (KLSKR) is the 'KMSKS' region element. Lys255 lines the ATP pocket.

This sequence belongs to the class-I aminoacyl-tRNA synthetase family. Glutamate--tRNA ligase type 1 subfamily. In terms of assembly, monomer.

It localises to the cytoplasm. It carries out the reaction tRNA(Glu) + L-glutamate + ATP = L-glutamyl-tRNA(Glu) + AMP + diphosphate. In terms of biological role, catalyzes the attachment of glutamate to tRNA(Glu) in a two-step reaction: glutamate is first activated by ATP to form Glu-AMP and then transferred to the acceptor end of tRNA(Glu). The chain is Glutamate--tRNA ligase 2 from Syntrophus aciditrophicus (strain SB).